A 172-amino-acid chain; its full sequence is Peptidyl-prolyl cis-trans isomerase (172 aa).

Residues 7–170 enclose the PPIase cyclophilin-type domain; that stretch reads FFDMTVGGAP…KVVKVADCGQ (164 aa).

The protein belongs to the cyclophilin-type PPIase family.

Its subcellular location is the cytoplasm. It catalyses the reaction [protein]-peptidylproline (omega=180) = [protein]-peptidylproline (omega=0). Its activity is regulated as follows. Binds cyclosporin A (CsA). CsA mediates some of its effects via an inhibitory action on PPIase. Functionally, PPIases accelerate the folding of proteins. It catalyzes the cis-trans isomerization of proline imidic peptide bonds in oligopeptides. The polypeptide is Peptidyl-prolyl cis-trans isomerase (CYP) (Zea mays (Maize)).